Consider the following 204-residue polypeptide: Urease accessory protein UreG (204 aa).

A GTP-binding site is contributed by 12-19; the sequence is GPVGSGKT.

Belongs to the SIMIBI class G3E GTPase family. UreG subfamily. As to quaternary structure, homodimer. UreD, UreF and UreG form a complex that acts as a GTP-hydrolysis-dependent molecular chaperone, activating the urease apoprotein by helping to assemble the nickel containing metallocenter of UreC. The UreE protein probably delivers the nickel.

The protein resides in the cytoplasm. Its function is as follows. Facilitates the functional incorporation of the urease nickel metallocenter. This process requires GTP hydrolysis, probably effectuated by UreG. The protein is Urease accessory protein UreG of Pseudomonas paraeruginosa (strain DSM 24068 / PA7) (Pseudomonas aeruginosa (strain PA7)).